Reading from the N-terminus, the 413-residue chain is Gamma-DL-glutamyl hydrolase (413 aa).

Positions methionine 1 to alanine 32 are cleaved as a signal peptide. 3 consecutive NlpC/P60 domains span residues aspartate 33–alanine 159, alanine 163–aspartate 287, and isoleucine 291–glutamine 413. Residue cysteine 194 is the Nucleophile of the active site. The Proton acceptor role is filled by histidine 247. The active site involves glutamine 259.

This sequence belongs to the peptidase C40 family.

The protein resides in the secreted. It localises to the cell wall. Its activity is regulated as follows. Inhibited by pretreatment with 1 mM 4-(hydroxymercuri)benzoate, a sulfhydryl inhibitor. Its function is as follows. Cleaves, in an endo-type manner, the gamma-glutamyl bond between D-glutamate and L-glutamate of poly-gamma-glutamate (PGA). The protein is Gamma-DL-glutamyl hydrolase (pgdS) of Bacillus subtilis (strain 168).